Consider the following 218-residue polypeptide: Small ribosomal subunit protein uS3c (218 aa).

The KH type-2 domain maps to 39 to 118; that stretch reads IRNFIKNYVQ…KLNIAITRIA (80 aa).

Belongs to the universal ribosomal protein uS3 family. In terms of assembly, part of the 30S ribosomal subunit.

The protein resides in the plastid. Its subcellular location is the chloroplast. The sequence is that of Small ribosomal subunit protein uS3c (rps3) from Ipomoea purpurea (Common morning glory).